Consider the following 344-residue polypeptide: tRNA N6-adenosine threonylcarbamoyltransferase (344 aa).

Positions 118 and 122 each coordinate Fe cation. Substrate-binding positions include 141 to 145, aspartate 174, glycine 187, and asparagine 284; that span reads TASGG. Fe cation is bound at residue aspartate 312.

This sequence belongs to the KAE1 / TsaD family. It depends on Fe(2+) as a cofactor.

It is found in the cytoplasm. It carries out the reaction L-threonylcarbamoyladenylate + adenosine(37) in tRNA = N(6)-L-threonylcarbamoyladenosine(37) in tRNA + AMP + H(+). Required for the formation of a threonylcarbamoyl group on adenosine at position 37 (t(6)A37) in tRNAs that read codons beginning with adenine. Is involved in the transfer of the threonylcarbamoyl moiety of threonylcarbamoyl-AMP (TC-AMP) to the N6 group of A37, together with TsaE and TsaB. TsaD likely plays a direct catalytic role in this reaction. The chain is tRNA N6-adenosine threonylcarbamoyltransferase from Desulfotalea psychrophila (strain LSv54 / DSM 12343).